A 314-amino-acid polypeptide reads, in one-letter code: Ribonuclease Z (314 aa).

Residues His61, His63, Asp65, His66, His137, Asp207, and His263 each contribute to the Zn(2+) site. The Proton acceptor role is filled by Asp65.

This sequence belongs to the RNase Z family. As to quaternary structure, homodimer. Zn(2+) is required as a cofactor.

The enzyme catalyses Endonucleolytic cleavage of RNA, removing extra 3' nucleotides from tRNA precursor, generating 3' termini of tRNAs. A 3'-hydroxy group is left at the tRNA terminus and a 5'-phosphoryl group is left at the trailer molecule.. In terms of biological role, zinc phosphodiesterase, which displays some tRNA 3'-processing endonuclease activity. Probably involved in tRNA maturation, by removing a 3'-trailer from precursor tRNA. This Thermococcus gammatolerans (strain DSM 15229 / JCM 11827 / EJ3) protein is Ribonuclease Z.